The chain runs to 286 residues: 3-hydroxyanthranilate 3,4-dioxygenase (286 aa).

The tract at residues 1–160 (MERRLGVRAW…SEQYRTGKPI (160 aa)) is domain A (catalytic). Position 43 (Arg43) interacts with O2. His47, Glu53, and His91 together coordinate Fe cation. A substrate-binding site is contributed by Glu53. Substrate-binding residues include Arg95 and Glu105. Positions 161-177 (PDQLLKEPPFPLSTRSI) are linker. The segment at 178–286 (MEPMSLDAWL…QDPACKKPLG (109 aa)) is domain B.

This sequence belongs to the 3-HAO family. As to quaternary structure, monomer. It depends on Fe(2+) as a cofactor.

The protein localises to the cytoplasm. Its subcellular location is the cytosol. The catalysed reaction is 3-hydroxyanthranilate + O2 = (2Z,4Z)-2-amino-3-carboxymuconate 6-semialdehyde. It participates in cofactor biosynthesis; NAD(+) biosynthesis; quinolinate from L-kynurenine: step 3/3. Its function is as follows. Catalyzes the oxidative ring opening of 3-hydroxyanthranilate to 2-amino-3-carboxymuconate semialdehyde, which spontaneously cyclizes to quinolinate. The polypeptide is 3-hydroxyanthranilate 3,4-dioxygenase (Homo sapiens (Human)).